Reading from the N-terminus, the 272-residue chain is Phosphonates import ATP-binding protein PhnC (272 aa).

The ABC transporter domain maps to 2–246; the sequence is LELQRLTKTY…VLATIYGAED (245 aa). 35 to 42 contacts ATP; the sequence is GPSGAGKS. The disordered stretch occupies residues 248–272; sequence ASSGREPAPEREPEDTERHLAEVGR. Positions 254-272 are enriched in basic and acidic residues; the sequence is PAPEREPEDTERHLAEVGR.

The protein belongs to the ABC transporter superfamily. Phosphonates importer (TC 3.A.1.9.1) family. In terms of assembly, the complex is composed of two ATP-binding proteins (PhnC), two transmembrane proteins (PhnE) and a solute-binding protein (PhnD).

It is found in the cell inner membrane. The catalysed reaction is phosphonate(out) + ATP + H2O = phosphonate(in) + ADP + phosphate + H(+). Its function is as follows. Part of the ABC transporter complex PhnCDE involved in phosphonates import. Responsible for energy coupling to the transport system. The chain is Phosphonates import ATP-binding protein PhnC from Chromohalobacter salexigens (strain ATCC BAA-138 / DSM 3043 / CIP 106854 / NCIMB 13768 / 1H11).